A 488-amino-acid chain; its full sequence is 6-phosphogluconate dehydrogenase, decarboxylating (488 aa).

NADP(+) contacts are provided by residues 9–14 (GLAVMG), 32–34 (NRT), 74–76 (VKA), and Asn102. Substrate is bound by residues Asn102 and 128 to 130 (SGG). Lys183 serves as the catalytic Proton acceptor. 186–187 (HN) contributes to the substrate binding site. Glu190 (proton donor) is an active-site residue. Substrate is bound by residues Tyr191, Lys260, Arg287, Arg451, and His457.

Belongs to the 6-phosphogluconate dehydrogenase family. As to quaternary structure, homodimer.

The catalysed reaction is 6-phospho-D-gluconate + NADP(+) = D-ribulose 5-phosphate + CO2 + NADPH. It participates in carbohydrate degradation; pentose phosphate pathway; D-ribulose 5-phosphate from D-glucose 6-phosphate (oxidative stage): step 3/3. In terms of biological role, catalyzes the oxidative decarboxylation of 6-phosphogluconate to ribulose 5-phosphate and CO(2), with concomitant reduction of NADP to NADPH. This is 6-phosphogluconate dehydrogenase, decarboxylating (gnd) from Treponema pallidum (strain Nichols).